The sequence spans 139 residues: Nucleoside diphosphate kinase (139 aa).

ATP-binding residues include lysine 10, phenylalanine 58, arginine 86, threonine 92, arginine 103, and asparagine 113. Residue histidine 116 is the Pros-phosphohistidine intermediate of the active site.

Belongs to the NDK family. Homotetramer. Mg(2+) is required as a cofactor.

It localises to the cytoplasm. The enzyme catalyses a 2'-deoxyribonucleoside 5'-diphosphate + ATP = a 2'-deoxyribonucleoside 5'-triphosphate + ADP. It catalyses the reaction a ribonucleoside 5'-diphosphate + ATP = a ribonucleoside 5'-triphosphate + ADP. Functionally, major role in the synthesis of nucleoside triphosphates other than ATP. The ATP gamma phosphate is transferred to the NDP beta phosphate via a ping-pong mechanism, using a phosphorylated active-site intermediate. This is Nucleoside diphosphate kinase from Nitratidesulfovibrio vulgaris (strain ATCC 29579 / DSM 644 / CCUG 34227 / NCIMB 8303 / VKM B-1760 / Hildenborough) (Desulfovibrio vulgaris).